The chain runs to 254 residues: Imidazole glycerol phosphate synthase subunit HisF (254 aa).

Catalysis depends on residues D11 and D130.

This sequence belongs to the HisA/HisF family. Heterodimer of HisH and HisF.

It localises to the cytoplasm. It catalyses the reaction 5-[(5-phospho-1-deoxy-D-ribulos-1-ylimino)methylamino]-1-(5-phospho-beta-D-ribosyl)imidazole-4-carboxamide + L-glutamine = D-erythro-1-(imidazol-4-yl)glycerol 3-phosphate + 5-amino-1-(5-phospho-beta-D-ribosyl)imidazole-4-carboxamide + L-glutamate + H(+). It functions in the pathway amino-acid biosynthesis; L-histidine biosynthesis; L-histidine from 5-phospho-alpha-D-ribose 1-diphosphate: step 5/9. IGPS catalyzes the conversion of PRFAR and glutamine to IGP, AICAR and glutamate. The HisF subunit catalyzes the cyclization activity that produces IGP and AICAR from PRFAR using the ammonia provided by the HisH subunit. The polypeptide is Imidazole glycerol phosphate synthase subunit HisF (Acidiphilium cryptum (strain JF-5)).